A 1099-amino-acid chain; its full sequence is SLIT-ROBO Rho GTPase-activating protein 3 (1099 aa).

The region spanning 19–314 (AQIKEIRTQL…AVDNLDSRSD (296 aa)) is the F-BAR domain. The stretch at 352–392 (QTELLMRYHQLQSRLATLKIENEEVRKTLDATMQTLQDMLT) forms a coiled coil. The disordered stretch occupies residues 470-493 (GERAECGTTRPPCLPPKPQKMRRP). The 189-residue stretch at 506 to 694 (GSMEAFIKDS…TIIIHHEAIF (189 aa)) folds into the Rho-GAP domain. Residues 744–803 (VEQIEAIAKFDYVGRSPRELSFKKGASLLLYHRASEDWWEGRHNGVDGLIPHQYIVVQDM) enclose the SH3 domain. A compositionally biased stretch (polar residues) spans 809 to 820 (DSLSQKADSEAS). Residues 809 to 846 (DSLSQKADSEASSGPLLDDKASSKNDLQSPTEHISDYG) are disordered. 5 positions are modified to phosphoserine: serine 817, serine 820, serine 821, serine 837, and serine 858. Residues 861-911 (AAIPRRRSGGDTHSPPRGLGPSIDTPPRAAACPSSPHKIPLSRGRIESPEK) form a disordered region. Residues 952 to 987 (HKSLEAEALAEDIEKTMSTALHELRELERQNTVKQA) adopt a coiled-coil conformation. A Phosphoserine modification is found at serine 954. Disordered stretches follow at residues 994-1014 (TLEPLKNPPGPISSEPASPLH) and 1045-1099 (ARLA…SGTM). The segment covering 1060-1074 (VRPVVQHRSSSSSSS) has biased composition (low complexity). Residues 1089–1099 (PNSSSDKSGTM) show a composition bias toward polar residues.

As to quaternary structure, homodimer. Forms a heterooligomer with SRGAP1 and SRGAP2 through its F-BAR domain. Interacts with WASF1. Probably interacts with ROBO1. Interacts with FASLG.

Functionally, GTPase-activating protein for RAC1 and perhaps CDC42, but not for RhoA small GTPase. May attenuate RAC1 signaling in neurons. This chain is SLIT-ROBO Rho GTPase-activating protein 3 (Srgap3), found in Mus musculus (Mouse).